Consider the following 316-residue polypeptide: Transaldolase (316 aa).

Lys-132 acts as the Schiff-base intermediate with substrate in catalysis.

This sequence belongs to the transaldolase family. Type 1 subfamily.

The protein resides in the cytoplasm. The catalysed reaction is D-sedoheptulose 7-phosphate + D-glyceraldehyde 3-phosphate = D-erythrose 4-phosphate + beta-D-fructose 6-phosphate. The protein operates within carbohydrate degradation; pentose phosphate pathway; D-glyceraldehyde 3-phosphate and beta-D-fructose 6-phosphate from D-ribose 5-phosphate and D-xylulose 5-phosphate (non-oxidative stage): step 2/3. Its function is as follows. Transaldolase is important for the balance of metabolites in the pentose-phosphate pathway. The sequence is that of Transaldolase from Methylomonas aminofaciens.